Consider the following 414-residue polypeptide: Particulate methane monooxygenase alpha subunit (414 aa).

The N-terminal stretch at 1-32 (MKTIKDRIAKWSAIGLLSAVAATAFYAPSASA) is a signal peptide. Positions 33, 48, 72, 137, and 139 each coordinate Cu cation. The interval 33–172 (HGEKSQAAFM…MSEFRNPVTT (140 aa)) is cupredoxin domain used to construct soluble pmoB (spmoB). Helical transmembrane passes span 186–206 (GNTY…IGYW) and 235–255 (VAMG…SSAN). Positions 265-414 (QAGTMRGMKP…IDAPLIPSFM (150 aa)) are cupredoxin domain used to construct soluble pmoB (spmoB).

As to quaternary structure, m.capsulatus has two forms of methane monooxygenase, a soluble (sMMO) and a membrane-bound (particulate) type (pMMO). The particulate type is a nonamer composed of three alpha:beta:gamma heterotrimeric protomers assembled into a cylindrical structure; the beta and gamma subunits comprise the bulk of the membrane-spanning regions and the soluble regions are derived primarily from alpha subunits which form two antiparallel beta-barrel-like structures each. This assembly, also called pMMO hydroxylase (pMMO-H), is proposed to associate with methanol dehydrogenase (MDH), also designated as pMMO-R, to form the pMMO-C complex which seems to have greater methane monooxygenase activity. The cofactor is Cu(2+).

It localises to the membrane. The enzyme catalyses methane + a quinol + O2 = methanol + a quinone + H2O. Functionally, methane monooxygenase is responsible for the initial oxygenation of methane to methanol in methanotrophs. At least in vitro, specific quinols can replace NADH as reductants. The protein is Particulate methane monooxygenase alpha subunit (pmoB1) of Methylococcus capsulatus (strain ATCC 33009 / NCIMB 11132 / Bath).